Reading from the N-terminus, the 767-residue chain is DNA topoisomerase 1 (767 aa).

Residues 1 to 23 (MSGDHLHNDSQIEADFRLNDSHK) show a composition bias toward basic and acidic residues. Positions 1–201 (MSGDHLHNDS…NKKKKPKKEE (201 aa)) are disordered. Serine 2 carries the post-translational modification N-acetylserine. Serine 2 and serine 10 each carry phosphoserine. The segment covering 24 to 39 (HKDKHKDREHRHKEHK) has biased composition (basic residues). Basic and acidic residues predominate over residues 40–110 (KDKEKDREKS…DAKIKKEKEN (71 aa)). Serine 59 carries the phosphoserine modification. Residue lysine 103 forms a Glycyl lysine isopeptide (Lys-Gly) (interchain with G-Cter in SUMO2) linkage. Lysine 105 is covalently cross-linked (Glycyl lysine isopeptide (Lys-Gly) (interchain with G-Cter in SUMO); alternate). Lysine 105 is covalently cross-linked (Glycyl lysine isopeptide (Lys-Gly) (interchain with G-Cter in SUMO2); alternate). Serine 114 is modified (phosphoserine). Residue lysine 119 forms a Glycyl lysine isopeptide (Lys-Gly) (interchain with G-Cter in SUMO); alternate linkage. Lysine 119 participates in a covalent cross-link: Glycyl lysine isopeptide (Lys-Gly) (interchain with G-Cter in SUMO2); alternate. Residue lysine 119 forms a Glycyl lysine isopeptide (Lys-Gly) (interchain with G-Cter in SUMO1); alternate linkage. Residues 131–168 (PKEDIKPLKRPRDEDDADYKPKKIKTEDIKKEKKRKLE) are compositionally biased toward basic and acidic residues. Glycyl lysine isopeptide (Lys-Gly) (interchain with G-Cter in SUMO2) cross-links involve residues lysine 136 and lysine 150. Lysine 155 participates in a covalent cross-link: Glycyl lysine isopeptide (Lys-Gly) (interchain with G-Cter in SUMO); alternate. Lysine 155 is covalently cross-linked (Glycyl lysine isopeptide (Lys-Gly) (interchain with G-Cter in SUMO2); alternate). Glycyl lysine isopeptide (Lys-Gly) (interchain with G-Cter in SUMO2) cross-links involve residues lysine 160 and lysine 166. A Glycyl lysine isopeptide (Lys-Gly) (interchain with G-Cter in SUMO2); alternate cross-link involves residue lysine 174. Lysine 174 is subject to N6-acetyllysine; alternate. Residues 181–201 (KDKDKKVPEPDNKKKKPKKEE) are compositionally biased toward basic and acidic residues. Residue lysine 206 forms a Glycyl lysine isopeptide (Lys-Gly) (interchain with G-Cter in SUMO2) linkage. Lysine 282 carries the post-translational modification N6-acetyllysine. Lysine 338 is covalently cross-linked (Glycyl lysine isopeptide (Lys-Gly) (interchain with G-Cter in SUMO2)). 2 interaction with DNA regions span residues 427–428 (KY) and 490–495 (RAGNEK). One can recognise a Topo IB-type catalytic domain in the interval 434-767 (SSRIKGEKDW…IDMADEDYEF (334 aa)). Serine 508 bears the Phosphoserine; by CK2 mark. A Glycyl lysine isopeptide (Lys-Gly) (interchain with G-Cter in SUMO2) cross-link involves residue lysine 551. The interaction with DNA stretch occupies residues 587 to 589 (TAK). Residues lysine 644, lysine 702, and lysine 714 each participate in a glycyl lysine isopeptide (Lys-Gly) (interchain with G-Cter in SUMO2) cross-link. Tyrosine 725 serves as the catalytic O-(3'-phospho-DNA)-tyrosine intermediate.

The protein belongs to the type IB topoisomerase family. In terms of assembly, monomer. Interacts with ERCC6. Interacts with TPRN; TPRN interacts with a number of DNA damage response proteins, is recruited to sites of DNA damage and may play a role in DNA damage repair. Post-translationally, sumoylated. Lys-119 is the main site of sumoylation. Sumoylation plays a role in partitioning TOP1 between nucleoli and nucleoplasm. Levels are dramatically increased on camptothecin (CPT) treatment. In terms of processing, phosphorylation at Ser-508 by CK2 increases binding to supercoiled DNA and sensitivity to camptothecin.

Its subcellular location is the nucleus. It localises to the nucleolus. The protein resides in the nucleoplasm. The catalysed reaction is ATP-independent breakage of single-stranded DNA, followed by passage and rejoining.. With respect to regulation, specifically inhibited by camptothecin (CPT), a plant alkaloid with antitumor activity. Its function is as follows. Releases the supercoiling and torsional tension of DNA introduced during the DNA replication and transcription by transiently cleaving and rejoining one strand of the DNA duplex. Introduces a single-strand break via transesterification at a target site in duplex DNA. The scissile phosphodiester is attacked by the catalytic tyrosine of the enzyme, resulting in the formation of a DNA-(3'-phosphotyrosyl)-enzyme intermediate and the expulsion of a 5'-OH DNA strand. The free DNA strand then rotates around the intact phosphodiester bond on the opposing strand, thus removing DNA supercoils. Finally, in the religation step, the DNA 5'-OH attacks the covalent intermediate to expel the active-site tyrosine and restore the DNA phosphodiester backbone. Regulates the alternative splicing of tissue factor (F3) pre-mRNA in endothelial cells. Involved in the circadian transcription of the core circadian clock component BMAL1 by altering the chromatin structure around the ROR response elements (ROREs) on the BMAL1 promoter. The sequence is that of DNA topoisomerase 1 (TOP1) from Chlorocebus aethiops (Green monkey).